The sequence spans 68 residues: Sec-independent protein translocase protein TatA (68 aa).

A helical membrane pass occupies residues 1–21 (MGSFSIWHWLIVLVVVLLLFG). The segment at 46–68 (EEAASADKTIDGKTVEHKSDEVR) is disordered. A compositionally biased stretch (basic and acidic residues) spans 53–68 (KTIDGKTVEHKSDEVR).

The protein belongs to the TatA/E family. In terms of assembly, the Tat system comprises two distinct complexes: a TatABC complex, containing multiple copies of TatA, TatB and TatC subunits, and a separate TatA complex, containing only TatA subunits. Substrates initially bind to the TatABC complex, which probably triggers association of the separate TatA complex to form the active translocon.

It localises to the cell inner membrane. Part of the twin-arginine translocation (Tat) system that transports large folded proteins containing a characteristic twin-arginine motif in their signal peptide across membranes. TatA could form the protein-conducting channel of the Tat system. The protein is Sec-independent protein translocase protein TatA of Sinorhizobium fredii (strain NBRC 101917 / NGR234).